Here is a 305-residue protein sequence, read N- to C-terminus: MALDKSIVVNFTSRLFADELAALQSKIGSVLPLGDCHRLQNIQALGLGCVCSRETSPDYIQIMQYLSKCTLAVLEEVRPDSLRLTRMDPSDNLQIKNVYAPFFQWDSNTQLAVLPPFFSRKDSTIVLESNGFDLVFPMVVPQQLGHAILQQLLVYHIYSKISAGAPDDVNMAELDLYTTNVSFMGRTYRLDVDNTDPRTALRVLDDLSMYLCILSALVPRGCLRLLTALVRHDRHPLTEVFEGVVPDEVTRIDLDQLSVPDDITRMRVMFSYLQSLSSIFNLGPRLHVYAYSAETLAASCWYSPR.

This sequence belongs to the herpesviridae TRX2 protein family. In terms of assembly, interacts with TRX1 and major capisd protein/MCP.

The protein resides in the virion. The protein localises to the host nucleus. Structural component of the T=16 icosahedral capsid. The capsid is composed of pentamers and hexamers of major capsid protein/MCP, which are linked together by heterotrimers called triplexes. These triplexes are formed by a single molecule of triplex protein 1/TRX1 and two copies of triplex protein 2/TRX2. Additionally, TRX1 is required for efficient transport of TRX2 to the nucleus, which is the site of capsid assembly. The polypeptide is Triplex capsid protein 2 (Homo sapiens (Human)).